Reading from the N-terminus, the 331-residue chain is WW domain-containing protein C2F3.14c (331 aa).

Residues 1–184 are disordered; it reads MSSSKDCKAT…TNENQAQPSI (184 aa). Residues 9–22 are compositionally biased toward polar residues; the sequence is ATSNVDQTIPASNV. Positions 23–41 are enriched in low complexity; it reads NSGDFISSNTSSSNSENSN. Over residues 57–89 the composition is skewed to polar residues; the sequence is SFISENTPKNTFESTQTYENLESISKNEPTSEA. A compositionally biased stretch (pro residues) spans 105-145; that stretch reads REPPLPNEPVPEEPLPGEPPLPDEPVPEEPLPGEPPLPNEP. Over residues 158-184 the composition is skewed to polar residues; the sequence is SDETVSETSKNDTSNSPTNENQAQPSI. The 34-residue stretch at 187-220 folds into the WW domain; the sequence is SEGHRIAAIWDPSQQAYYFWDTLTNTTSWNNPLE. The segment at 290–309 is disordered; it reads YTRKEMEQMKRRTKEKKEMK. The span at 292-309 shows a compositional bias: basic and acidic residues; the sequence is RKEMEQMKRRTKEKKEMK.

Its subcellular location is the nucleus. The polypeptide is WW domain-containing protein C2F3.14c (Schizosaccharomyces pombe (strain 972 / ATCC 24843) (Fission yeast)).